We begin with the raw amino-acid sequence, 1257 residues long: Bifunctional autolysin (1257 aa).

Positions 1-29 (MAKKFNYKLPSMVALTLVGSAVTAHQVQA) are cleaved as a signal peptide. Polar residues predominate over residues 99 to 137 (QVNGDTRATQSTTSNNAKPVTKSTNTTAPKTNNNVTSAG). Disordered stretches follow at residues 99 to 150 (QVNG…NSEN), 173 to 217 (AAPK…KYKP), and 417 to 441 (TQSTTTPTTPSKPSTPSKPSTPSTG). Composition is skewed to low complexity over residues 173–208 (AAPKATPVAPKAKTEATPKVTTFSASAQPRSAAAAP) and 419–440 (STTTPTTPSKPSTPSKPSTPST). The interval 197-776 (ASAQPRSAAA…AVAQPKTAVK (580 aa)) is N-acetylmuramoyl-L-alanine amidase. GW domains follow at residues 444–518 (TVAA…YNTA), 520–594 (SPVN…DTAK), 613–687 (TVSS…YNNA), 689–763 (SPVN…VPAA), 785–860 (TTQT…VQNL), 862–937 (KEVK…APTA), and 944–1018 (AAKD…KELI). Residues 777 to 1257 (AYAVTKPQTT…GKYFDIPQYK (481 aa)) form an endo-beta-N-acetylglucosaminidase region.

The protein in the N-terminal section; belongs to the N-acetylmuramoyl-L-alanine amidase 2 family. In the C-terminal section; belongs to the glycosyl hydrolase 73 family. As to quaternary structure, oligomer; forms a ring structure at the cell surface which is important for efficient partitioning of daughter cells after cell division. Post-translationally, undergoes proteolytic processing to generate the two extracellular lytic enzymes, probably at the septal region on the cell surface.

The protein localises to the secreted. The catalysed reaction is Hydrolyzes the link between N-acetylmuramoyl residues and L-amino acid residues in certain cell-wall glycopeptides.. The enzyme catalyses an N(4)-(oligosaccharide-(1-&gt;3)-[oligosaccharide-(1-&gt;6)]-beta-D-Man-(1-&gt;4)-beta-D-GlcNAc-(1-&gt;4)-alpha-D-GlcNAc)-L-asparaginyl-[protein] + H2O = an oligosaccharide-(1-&gt;3)-[oligosaccharide-(1-&gt;6)]-beta-D-Man-(1-&gt;4)-D-GlcNAc + N(4)-(N-acetyl-beta-D-glucosaminyl)-L-asparaginyl-[protein]. Functionally, endohydrolysis of the di-N-acetylchitobiosyl unit in high-mannose glycopeptides and glycoproteins containing the -[(Man)5(GlcNAc)2]-Asn structure. One N-acetyl-D-glucosamine residue remains attached to the protein; the rest of the oligosaccharide is released intact. Cleaves the peptidoglycan connecting the daughter cells at the end of the cell division cycle, resulting in the separation of the two newly divided cells. Acts as an autolysin in penicillin-induced lysis. The sequence is that of Bifunctional autolysin (atl) from Staphylococcus aureus (strain MRSA252).